The chain runs to 303 residues: Protoheme IX farnesyltransferase (303 aa).

The next 7 helical transmembrane spans lie at 25 to 45 (MGLVQGNLIPAFAGSWLAIVL), 54 to 74 (IPQILMMLVGSTLIMGGACAL), 118 to 138 (LLFALNIPSGVIGLLGIVGYV), 151 to 171 (WNTVIGSFPGAVPPLIGWTAI), 177 to 197 (LVAVALFLVIFCWQPIHFYAL), 230 to 250 (LVVLLPLPFLLSSLGVTFIVL), and 280 to 300 (FIYSLNYLVVFFVLVVVISLI).

It belongs to the UbiA prenyltransferase family. Protoheme IX farnesyltransferase subfamily. Interacts with CtaA.

It is found in the cell membrane. The catalysed reaction is heme b + (2E,6E)-farnesyl diphosphate + H2O = Fe(II)-heme o + diphosphate. It participates in porphyrin-containing compound metabolism; heme O biosynthesis; heme O from protoheme: step 1/1. Functionally, converts heme B (protoheme IX) to heme O by substitution of the vinyl group on carbon 2 of heme B porphyrin ring with a hydroxyethyl farnesyl side group. The polypeptide is Protoheme IX farnesyltransferase (Staphylococcus saprophyticus subsp. saprophyticus (strain ATCC 15305 / DSM 20229 / NCIMB 8711 / NCTC 7292 / S-41)).